The following is an 81-amino-acid chain: Sulfur carrier protein TusA (81 aa).

Cysteine 19 (cysteine persulfide intermediate) is an active-site residue.

The protein belongs to the sulfur carrier protein TusA family. As to quaternary structure, interacts with IscS.

The protein localises to the cytoplasm. It functions in the pathway tRNA modification. Functionally, sulfur carrier protein involved in sulfur trafficking in the cell. Part of a sulfur-relay system required for 2-thiolation during synthesis of 2-thiouridine of the modified wobble base 5-methylaminomethyl-2-thiouridine (mnm(5)s(2)U) in tRNA. Interacts with IscS and stimulates its cysteine desulfurase activity. Accepts an activated sulfur from IscS, which is then transferred to TusD, and thus determines the direction of sulfur flow from IscS to 2-thiouridine formation. Also appears to be involved in sulfur transfer for the biosynthesis of molybdopterin. The polypeptide is Sulfur carrier protein TusA (Serratia proteamaculans (strain 568)).